Here is a 549-residue protein sequence, read N- to C-terminus: Undecaprenyl phosphate-alpha-4-amino-4-deoxy-L-arabinose arabinosyl transferase 1 (549 aa).

A run of 12 helical transmembrane segments spans residues 9 to 29 (LLLIAFGLFYLLPLATHGLWI), 80 to 102 (LFGVRVASALSTGLSVVLAYLLA), 112 to 132 (SLASALLYMSFTVVALQAGYA), 133 to 153 (NLDPQFTFWVNLSLVALWFTF), 176 to 196 (FMTKGFLAWLLPVLVALPYAI), 204 to 224 (LLIYGGIGVLVAILISLPWAL), 257 to 277 (WWYYLPLLVGFSVPWVLLLPA), 290 to 310 (SSGFLLLWLVLPLAFFSLSKG), 312 to 332 (LPAYILPCLLPLALLMGNTLV), 342 to 362 (LLAFNGVLNLVAGLLGLLALV), 377 to 397 (HLVLVYVLLLGWILSNLLQAM), and 402 to 422 (LWAAPALGSFLLVALAPAALP).

The protein belongs to the glycosyltransferase 83 family.

It localises to the cell inner membrane. The catalysed reaction is 4-amino-4-deoxy-alpha-L-arabinopyranosyl di-trans,octa-cis-undecaprenyl phosphate + lipid IVA = lipid IIA + di-trans,octa-cis-undecaprenyl phosphate.. It participates in lipopolysaccharide metabolism; 4-amino-4-deoxy-beta-L-arabinose-lipid A biosynthesis. In terms of biological role, catalyzes the transfer of the L-Ara4N moiety of the glycolipid undecaprenyl phosphate-alpha-L-Ara4N to lipid A. The modified arabinose is attached to lipid A and is required for resistance to polymyxin and cationic antimicrobial peptides. This Pseudomonas fluorescens (strain ATCC BAA-477 / NRRL B-23932 / Pf-5) protein is Undecaprenyl phosphate-alpha-4-amino-4-deoxy-L-arabinose arabinosyl transferase 1.